The sequence spans 350 residues: Anthranilate phosphoribosyltransferase (350 aa).

5-phospho-alpha-D-ribose 1-diphosphate is bound by residues glycine 82, 85-86 (GD), serine 90, 92-95 (NVST), 110-118 (KHGNRAVTG), and glycine 122. Glycine 82 contacts anthranilate. Serine 94 provides a ligand contact to Mg(2+). Asparagine 113 lines the anthranilate pocket. Residue arginine 168 coordinates anthranilate. Mg(2+) is bound by residues aspartate 232 and glutamate 233.

This sequence belongs to the anthranilate phosphoribosyltransferase family. As to quaternary structure, homodimer. Mg(2+) serves as cofactor.

It carries out the reaction N-(5-phospho-beta-D-ribosyl)anthranilate + diphosphate = 5-phospho-alpha-D-ribose 1-diphosphate + anthranilate. It participates in amino-acid biosynthesis; L-tryptophan biosynthesis; L-tryptophan from chorismate: step 2/5. Functionally, catalyzes the transfer of the phosphoribosyl group of 5-phosphorylribose-1-pyrophosphate (PRPP) to anthranilate to yield N-(5'-phosphoribosyl)-anthranilate (PRA). The chain is Anthranilate phosphoribosyltransferase from Methanothermobacter marburgensis (strain ATCC BAA-927 / DSM 2133 / JCM 14651 / NBRC 100331 / OCM 82 / Marburg) (Methanobacterium thermoautotrophicum).